Consider the following 150-residue polypeptide: Large ribosomal subunit protein bL9 (150 aa).

The protein belongs to the bacterial ribosomal protein bL9 family.

Its function is as follows. Binds to the 23S rRNA. In Cupriavidus metallidurans (strain ATCC 43123 / DSM 2839 / NBRC 102507 / CH34) (Ralstonia metallidurans), this protein is Large ribosomal subunit protein bL9.